A 93-amino-acid polypeptide reads, in one-letter code: MKQFMLVKTFDALFAELSDKARTRPAGSGTVAALDAGVHGIGKKILEEAGEVWLAAEHEGDEALAEEISQLLYWTQVLMVSRGLTLDDVYRKL.

The protein belongs to the PRA-PH family.

It is found in the cytoplasm. It catalyses the reaction 1-(5-phospho-beta-D-ribosyl)-ATP + H2O = 1-(5-phospho-beta-D-ribosyl)-5'-AMP + diphosphate + H(+). The protein operates within amino-acid biosynthesis; L-histidine biosynthesis; L-histidine from 5-phospho-alpha-D-ribose 1-diphosphate: step 2/9. This Mycolicibacterium smegmatis (strain ATCC 700084 / mc(2)155) (Mycobacterium smegmatis) protein is Phosphoribosyl-ATP pyrophosphatase.